We begin with the raw amino-acid sequence, 537 residues long: Lysosomal cobalamin transport escort protein LMBD1 (537 aa).

Over M1–E7 the chain is Extracellular. The helical transmembrane segment at L8–V28 threads the bilayer. Residues Y29–A47 lie on the Cytoplasmic side of the membrane. Residues I48–V68 traverse the membrane as a helical segment. Over S69–G98 the chain is Extracellular. Residues N75 and N85 are each glycosylated (N-linked (GlcNAc...) asparagine). A helical membrane pass occupies residues Y99–F119. The Cytoplasmic portion of the chain corresponds to Y120–T142. Residues S143–I163 traverse the membrane as a helical segment. At P164 to N186 the chain is on the extracellular side. N168 carries an N-linked (GlcNAc...) asparagine glycan. A helical transmembrane segment spans residues G187–I207. The Cytoplasmic portion of the chain corresponds to T208–K303. A helical membrane pass occupies residues I304–S324. At N325–P362 the chain is on the extracellular side. N345 is a glycosylation site (N-linked (GlcNAc...) asparagine). The chain crosses the membrane as a helical span at residues L363–I383. Over R384 to Q406 the chain is Cytoplasmic. A helical membrane pass occupies residues A407–Y427. Residues S428–K484 lie on the Extracellular side of the membrane. N445, N446, and N455 each carry an N-linked (GlcNAc...) asparagine glycan. Residues F485–I505 form a helical membrane-spanning segment. The Cytoplasmic segment spans residues G506–P537.

Belongs to the LIMR family. LMBRD1 subfamily.

The protein localises to the endoplasmic reticulum membrane. The protein resides in the lysosome membrane. It is found in the cell membrane. Lysosomal membrane chaperone required to export cobalamin (vitamin B12) from the lysosome to the cytosol, allowing its conversion to cofactors. Targets ABCD4 transporter from the endoplasmic reticulum to the lysosome. Then forms a complex with lysosomal ABCD4 and cytoplasmic MMACHC to transport cobalamin across the lysosomal membrane. May play a role in mediating and regulating the internalization of the insulin receptor. In Xenopus laevis (African clawed frog), this protein is Lysosomal cobalamin transport escort protein LMBD1 (lmbrd1).